A 187-amino-acid chain; its full sequence is GTP cyclohydrolase 1 (187 aa).

C76, H79, and C148 together coordinate Zn(2+).

This sequence belongs to the GTP cyclohydrolase I family. Toroid-shaped homodecamer, composed of two pentamers of five dimers.

The catalysed reaction is GTP + H2O = 7,8-dihydroneopterin 3'-triphosphate + formate + H(+). It participates in cofactor biosynthesis; 7,8-dihydroneopterin triphosphate biosynthesis; 7,8-dihydroneopterin triphosphate from GTP: step 1/1. The chain is GTP cyclohydrolase 1 from Streptococcus agalactiae serotype V (strain ATCC BAA-611 / 2603 V/R).